We begin with the raw amino-acid sequence, 254 residues long: 3-oxo-5-alpha-steroid 4-dehydrogenase 2 (254 aa).

The next 4 membrane-spanning stretches (helical) occupy residues 8-28, 72-92, 146-166, and 206-226; these read SPVLAGSATLAALGALALYFA, PRSLFGPPATVLLGLFCAHYF, FSLGVFLFILGMGINIHSDYI, and LATWSLPALAFAFFSLCFLGL.

This sequence belongs to the steroid 5-alpha reductase family.

The protein localises to the microsome membrane. The protein resides in the endoplasmic reticulum membrane. It carries out the reaction a 3-oxo-5alpha-steroid + NADP(+) = a 3-oxo-Delta(4)-steroid + NADPH + H(+). The enzyme catalyses 17beta-hydroxy-5alpha-androstan-3-one + NADP(+) = testosterone + NADPH + H(+). It catalyses the reaction 5alpha-pregnane-3,20-dione + NADP(+) = progesterone + NADPH + H(+). Its function is as follows. Converts testosterone (T) into 5-alpha-dihydrotestosterone (DHT) and progesterone or corticosterone into their corresponding 5-alpha-3-oxosteroids. It plays a central role in sexual differentiation and androgen physiology. The protein is 3-oxo-5-alpha-steroid 4-dehydrogenase 2 (SRD5A2) of Sus scrofa (Pig).